A 298-amino-acid chain; its full sequence is GTPase Era (298 aa).

In terms of domain architecture, Era-type G spans arginine 8–glutamate 176. Residues glycine 16 to serine 23 form a G1 region. Glycine 16–serine 23 lines the GTP pocket. A G2 region spans residues glutamine 42–histidine 46. The G3 stretch occupies residues aspartate 63–glycine 66. Residues aspartate 63 to leucine 67 and asparagine 125 to aspartate 128 contribute to the GTP site. The G4 stretch occupies residues asparagine 125–aspartate 128. The segment at valine 155–alanine 157 is G5. The 85-residue stretch at valine 199 to lysine 283 folds into the KH type-2 domain.

It belongs to the TRAFAC class TrmE-Era-EngA-EngB-Septin-like GTPase superfamily. Era GTPase family. In terms of assembly, monomer.

It localises to the cytoplasm. The protein localises to the cell inner membrane. Its function is as follows. An essential GTPase that binds both GDP and GTP, with rapid nucleotide exchange. Plays a role in 16S rRNA processing and 30S ribosomal subunit biogenesis and possibly also in cell cycle regulation and energy metabolism. In Xylella fastidiosa (strain M12), this protein is GTPase Era.